A 100-amino-acid chain; its full sequence is Large ribosomal subunit protein uL23 (100 aa).

It belongs to the universal ribosomal protein uL23 family. Part of the 50S ribosomal subunit. Contacts protein L29, and trigger factor when it is bound to the ribosome.

In terms of biological role, one of the early assembly proteins it binds 23S rRNA. One of the proteins that surrounds the polypeptide exit tunnel on the outside of the ribosome. Forms the main docking site for trigger factor binding to the ribosome. This chain is Large ribosomal subunit protein uL23, found in Proteus mirabilis (strain HI4320).